A 223-amino-acid polypeptide reads, in one-letter code: Acetate CoA-transferase subunit beta (223 aa).

Glu46 is an active-site residue.

This sequence belongs to the 3-oxoacid CoA-transferase subunit B family. In terms of assembly, heterotetramer composed of two alpha subunits (AtoD) and two beta subunits (AtoA).

The enzyme catalyses an acyl-CoA + acetate = a carboxylate + acetyl-CoA. It catalyses the reaction acetoacetate + acetyl-CoA = acetoacetyl-CoA + acetate. It participates in lipid metabolism; short-chain fatty acid metabolism. Functionally, coenzyme A transferase which is involved in short-chain fatty acid degradation and catalyzes the activation of short-chain fatty acids to their respective CoA thiolesters. The protein is Acetate CoA-transferase subunit beta (atoA) of Haemophilus influenzae (strain ATCC 51907 / DSM 11121 / KW20 / Rd).